The following is a 282-amino-acid chain: Nucleotide-binding protein XCC2806 (282 aa).

5–12 (GLSGSGKS) is a binding site for ATP. 57–60 (DVRS) is a GTP binding site.

It belongs to the RapZ-like family.

In terms of biological role, displays ATPase and GTPase activities. In Xanthomonas campestris pv. campestris (strain ATCC 33913 / DSM 3586 / NCPPB 528 / LMG 568 / P 25), this protein is Nucleotide-binding protein XCC2806.